Here is a 198-residue protein sequence, read N- to C-terminus: tRNA(Phe) 7-((3-amino-3-carboxypropyl)-4-demethylwyosine(37)-N(4))-methyltransferase 1 (198 aa).

Belongs to the TYW3 family.

It catalyses the reaction 4-demethyl-7-[(3S)-3-amino-3-carboxypropyl]wyosine(37) in tRNA(Phe) + S-adenosyl-L-methionine = 7-[(3S)-3-amino-3-carboxypropyl]wyosine(37) in tRNA(Phe) + S-adenosyl-L-homocysteine + H(+). S-adenosyl-L-methionine-dependent methyltransferase that acts as a component of the wyosine derivatives biosynthesis pathway. Probably methylates N-4 position of wybutosine-86 to produce wybutosine-72. The chain is tRNA(Phe) 7-((3-amino-3-carboxypropyl)-4-demethylwyosine(37)-N(4))-methyltransferase 1 from Thermococcus kodakarensis (strain ATCC BAA-918 / JCM 12380 / KOD1) (Pyrococcus kodakaraensis (strain KOD1)).